Reading from the N-terminus, the 1668-residue chain is MAGQGDCCVKVAVRIRPQLSKEKIEGCHICTSVTPGEPQVLLGKDKAFTYDFVFDLDTWQEQIYSTCVSKLIEGCFEGYNATVLAYGQTGAGKTYTMGTGFDTVTSEEEQGIIPRAIAHLFRGIDERKRRAQEKGVTGPEFKVSAQFLELYNEEILDLFDSTRDPDARHRRSNIKIHEDANGGIYTTGVTSRLINSQEELIQCLKQGALSRTTASTQMNVQSSRSHAIFTIHLCQMRVCAQPDLVNETVTGLPDGAAPTGTEYETLTAKFHFVDLAGSERLKRTGATGERAKEGISINCGLLALGNVISALGDQSKKVVHVPYRDSKLTRLLQDSLGGNSQTIMIACVSPSDRDFMETLNTLKYANRARNIKNKVVVNQDKTSQQISALRAEIARLQMELMEYKAGKRVIGEDGTEGYSDLFRENAMLQKENGALRLRVKAMQEAIDAINNRVTQLMSQEANLLLAKAGDGNEAIGALIQNYIREIEELRTKLLESEAMNESLRRSLSRASARNPYSLGASPAGPAFGGSPATSMEDASEVIRKAKQDLERLKKKEVRQRRKSPEKEAFKKRAKLQAENSEETDENEAEEEEEERDESGCEEEEGREDEDEDSGSEESLVDSDSDPEEKEVNFQADLADLTCEIEIKQKLIDELENSQRRLQTLKHQYEEKLILLQNKIRDTQLERDRVLQNLSTMECYTEEKANKIKADYEKRLREMNRDLQKLQAAQKEHARLLKNQSRYERELKKLQAEVAEMKKAKVALMKQMREEQQRRRLVETKRNREIAQLKKEQRRQEFQIRALESQKRQQEIVLRRKTQEVSALRRLAKPMSERVAGRVGLKPPNMDSGAEVSASTTSSEAESGARSVSSIVRQWNRKIDHFLGDRPTATVNGGRPARKKFQKKGASQSFSKAARLKWQSLERRIIDIVMQRMTIVNLEADMERLIKKREELFLLQEALRRKREHLQAESPEEEKGLQELAEEIEVLAANIDYINDSITDCQATIVQLEETKEELDSTDTSVVISSCSLAEARLLLDNFLKASIDKGLQVAQKEAQIRLLEGRLRQTDMTGSSQNHLLLDALREKAEAHPELQALIYNVQHENGYASTDEEVSEFSEGSFSQSFTMKGSTSHDDFKFKGEPKLSAQMKAVSAECLGPPLDSSTKNITKSLASLVEIKEDGVGFSIRDPYYRDKVSRTVSLPTRGSTFPRQSRGATDTSPLTRRKSYDRGQPIRSTDMGFTPPSSPPTRPRNDRNVFSRLTSNQSQGSALDKSDDSDSSLSEVLRGIITPIGGAKGARTAPLQCISMAEGHTKPILCLDATDELLFTGSKDRSCKMWNLVTGQEIAALKGHPNNVVSIKYCSHSGLVFSVSSSYIKVWDIRDSAKCIRTLTSSGQVISGDACIATSTRAITSAQGEHQINQMALSPSGSMLYVASGNAVRIWELNRFQPIGKLTGHIGPVMCLTVTQTSNQHDLVVTGSKDHYVKMFQLGDCVTGTIGPTHNFEPPHYDGIECLAIQGDILFSGSRDNGIKKWDLDQQELIQQIPNAHKDWVCALAFVPGRPMLLSACRAGFIKVWNVDNFTPIGEIKGHDSPINAICTNSKHIFTASSDCRVKLWNYVPGLTPCLPRRVLAIKGRAPPCPDLPPPPLTLPILPFPVFPPPRSELLLHVT.

The Kinesin motor domain maps to 8-371 (CVKVAVRIRP…LKYANRARNI (364 aa)). Residue 87–94 (GQTGAGKT) participates in ATP binding. Residues 372-465 (KNKVVVNQDK…LMSQEANLLL (94 aa)) adopt a coiled-coil conformation. The tract at residues 401-1100 (MEYKAGKRVI…LQALIYNVQH (700 aa)) is interaction with TRIM3. Disordered stretches follow at residues 553–629 (KKKE…PEEK) and 837–866 (RVGLKPPNMDSGAEVSASTTSSEAESGARS). Residues 579 to 628 (NSEETDENEAEEEEEERDESGCEEEEGREDEDEDSGSEESLVDSDSDPEE) show a composition bias toward acidic residues. S580 carries the phosphoserine modification. T583 carries the post-translational modification Phosphothreonine. Over residues 847-866 (SGAEVSASTTSSEAESGARS) the composition is skewed to low complexity. Positions 924 to 1019 (IIDIVMQRMT…TKEELDSTDT (96 aa)) form a coiled coil. Phosphoserine is present on residues S1150, S1168, and S1217. A compositionally biased stretch (polar residues) spans 1199 to 1219 (LPTRGSTFPRQSRGATDTSPL). Residues 1199–1253 (LPTRGSTFPRQSRGATDTSPLTRRKSYDRGQPIRSTDMGFTPPSSPPTRPRNDRN) form a disordered region. T1239 carries the phosphothreonine modification. S1243 carries the post-translational modification Phosphoserine. 7 WD repeats span residues 1308 to 1345 (GHTKPILCLDATDELLFTGSKDRSCKMWNLVTGQEIAA), 1348 to 1386 (GHPNNVVSIKYCSHSGLVFSVSSSYIKVWDIRDSAKCIR), 1412 to 1450 (QGEHQINQMALSPSGSMLYVASGNAVRIWELNRFQPIGK), 1453 to 1495 (GHIG…TGTI), 1504 to 1541 (PHYDGIECLAIQGDILFSGSRDNGIKKWDLDQQELIQQ), 1545 to 1584 (AHKDWVCALAFVPGRPMLLSACRAGFIKVWNVDNFTPIGE), and 1587 to 1624 (GHDSPINAICTNSKHIFTASSDCRVKLWNYVPGLTPCL).

This sequence belongs to the TRAFAC class myosin-kinesin ATPase superfamily. Kinesin family. In terms of assembly, interacts with TRIM3; the interaction positively affects motility of KIF21B. Interacts with GABARAP and GABA(A) receptor subunits: GABRG2, GABRA1 and GABRA2. May interact with GABA(A) receptor subunits: GABRB2 and GABRB3. As to expression, expressed in brain (at protein level). Expressed in spleen and at lower levels in testes.

Its subcellular location is the cytoplasm. The protein resides in the cytoskeleton. The protein localises to the cell projection. It is found in the dendrite. It localises to the growth cone. Its subcellular location is the axon. The protein resides in the cytoplasmic vesicle. In terms of biological role, plus-end directed microtubule-dependent motor protein which displays processive activity. Is involved in regulation of microtubule dynamics, synapse function and neuronal morphology, including dendritic tree branching and spine formation. Plays a role in lerning and memory. Involved in delivery of gamma-aminobutyric acid (GABA(A)) receptor to cell surface. The sequence is that of Kinesin-like protein KIF21B (Kif21b) from Mus musculus (Mouse).